An 804-amino-acid chain; its full sequence is Elongation factor G, mitochondrial (804 aa).

A mitochondrion-targeting transit peptide spans 1–63 (MSMHRVARAV…RHFSQSPIIR (63 aa)). In terms of domain architecture, tr-type G spans 99–385 (RRVRNIGIAA…AVCDYLPNPA (287 aa)). Residues 108 to 115 (AHIDSGKT), 183 to 187 (DTPGH), and 237 to 240 (NKMD) each bind GTP.

The protein belongs to the TRAFAC class translation factor GTPase superfamily. Classic translation factor GTPase family. EF-G/EF-2 subfamily.

The protein localises to the mitochondrion. The protein operates within protein biosynthesis; polypeptide chain elongation. Functionally, mitochondrial GTPase that catalyzes the GTP-dependent ribosomal translocation step during translation elongation. During this step, the ribosome changes from the pre-translocational (PRE) to the post-translocational (POST) state as the newly formed A-site-bound peptidyl-tRNA and P-site-bound deacylated tRNA move to the P and E sites, respectively. Catalyzes the coordinated movement of the two tRNA molecules, the mRNA and conformational changes in the ribosome. This chain is Elongation factor G, mitochondrial (mef1), found in Botryotinia fuckeliana (strain B05.10) (Noble rot fungus).